A 345-amino-acid chain; its full sequence is Phosphoribosylformylglycinamidine cyclo-ligase (345 aa).

The protein belongs to the AIR synthase family.

Its subcellular location is the cytoplasm. The catalysed reaction is 2-formamido-N(1)-(5-O-phospho-beta-D-ribosyl)acetamidine + ATP = 5-amino-1-(5-phospho-beta-D-ribosyl)imidazole + ADP + phosphate + H(+). It functions in the pathway purine metabolism; IMP biosynthesis via de novo pathway; 5-amino-1-(5-phospho-D-ribosyl)imidazole from N(2)-formyl-N(1)-(5-phospho-D-ribosyl)glycinamide: step 2/2. The polypeptide is Phosphoribosylformylglycinamidine cyclo-ligase (Shewanella putrefaciens (strain CN-32 / ATCC BAA-453)).